Consider the following 692-residue polypeptide: Elongation factor G (692 aa).

The region spanning 8–283 (DKYRNIGIMA…AVVDYMPSPL (276 aa)) is the tr-type G domain. GTP contacts are provided by residues 17–24 (AHIDAGKT), 81–85 (DTPGH), and 135–138 (NKMD).

Belongs to the TRAFAC class translation factor GTPase superfamily. Classic translation factor GTPase family. EF-G/EF-2 subfamily.

Its subcellular location is the cytoplasm. Catalyzes the GTP-dependent ribosomal translocation step during translation elongation. During this step, the ribosome changes from the pre-translocational (PRE) to the post-translocational (POST) state as the newly formed A-site-bound peptidyl-tRNA and P-site-bound deacylated tRNA move to the P and E sites, respectively. Catalyzes the coordinated movement of the two tRNA molecules, the mRNA and conformational changes in the ribosome. The polypeptide is Elongation factor G (Trichlorobacter lovleyi (strain ATCC BAA-1151 / DSM 17278 / SZ) (Geobacter lovleyi)).